We begin with the raw amino-acid sequence, 455 residues long: D-arabinitol 4-dehydrogenase (455 aa).

Belongs to the mannitol dehydrogenase family. As to quaternary structure, monomer.

The catalysed reaction is D-arabinitol + NAD(+) = D-xylulose + NADH + H(+). It functions in the pathway carbohydrate metabolism; D-arabinitol metabolism. This is D-arabinitol 4-dehydrogenase (dalD) from Klebsiella pneumoniae.